Consider the following 187-residue polypeptide: Protein GrpE (187 aa).

The protein belongs to the GrpE family. Homodimer.

The protein resides in the cytoplasm. Functionally, participates actively in the response to hyperosmotic and heat shock by preventing the aggregation of stress-denatured proteins, in association with DnaK and GrpE. It is the nucleotide exchange factor for DnaK and may function as a thermosensor. Unfolded proteins bind initially to DnaJ; upon interaction with the DnaJ-bound protein, DnaK hydrolyzes its bound ATP, resulting in the formation of a stable complex. GrpE releases ADP from DnaK; ATP binding to DnaK triggers the release of the substrate protein, thus completing the reaction cycle. Several rounds of ATP-dependent interactions between DnaJ, DnaK and GrpE are required for fully efficient folding. The polypeptide is Protein GrpE (Albidiferax ferrireducens (strain ATCC BAA-621 / DSM 15236 / T118) (Rhodoferax ferrireducens)).